Reading from the N-terminus, the 366-residue chain is MMSPDLDLNFSSNCNLYDHRPVARVLIPLVYSIICPVGLLGNALALHVVISSTTKINSITLYSANLAVSDILFCLSLPLRAVYYGLGFHWPMGEVLCKAIALLFYLNCYAGVNFMTCLAVDRFVALVFPARLAKLRKAKNVRFVCLAIWLLVLAQTLPLLTIGLTKTEPDSSITCMEYPNFEGVFKGLPYMLIVAVVLGFGIPVMTIIACYSILTHKLHQAAKSNQLTERSGKTKKARGVIAGVVFVFVVCFSPYHIDILQYMIRKLLYETDCKELQSFQISLHITVCLMNLNSCLDPFVYFFACKGYKQKVMRMMKWQVGTHFSSVKNSAESSGTGDVLGTRRNNRIIMNNVGEDQQICYQPSAT.

The Extracellular portion of the chain corresponds to 1 to 24 (MMSPDLDLNFSSNCNLYDHRPVAR). An N-linked (GlcNAc...) asparagine glycan is attached at Asn-9. A helical membrane pass occupies residues 25 to 50 (VLIPLVYSIICPVGLLGNALALHVVI). Over 51–70 (SSTTKINSITLYSANLAVSD) the chain is Cytoplasmic. The helical transmembrane segment at 71-88 (ILFCLSLPLRAVYYGLGF) threads the bilayer. Residues 89–98 (HWPMGEVLCK) lie on the Extracellular side of the membrane. Cysteines 97 and 175 form a disulfide. A helical membrane pass occupies residues 99–120 (AIALLFYLNCYAGVNFMTCLAV). The Cytoplasmic portion of the chain corresponds to 121 to 142 (DRFVALVFPARLAKLRKAKNVR). A helical membrane pass occupies residues 143-161 (FVCLAIWLLVLAQTLPLLT). Residues 162-187 (IGLTKTEPDSSITCMEYPNFEGVFKG) lie on the Extracellular side of the membrane. The chain crosses the membrane as a helical span at residues 188 to 210 (LPYMLIVAVVLGFGIPVMTIIAC). Topologically, residues 211–236 (YSILTHKLHQAAKSNQLTERSGKTKK) are cytoplasmic. A helical membrane pass occupies residues 237 to 260 (ARGVIAGVVFVFVVCFSPYHIDIL). Residues 261–280 (QYMIRKLLYETDCKELQSFQ) are Extracellular-facing. Residues 281 to 305 (ISLHITVCLMNLNSCLDPFVYFFAC) form a helical membrane-spanning segment. Topologically, residues 306–366 (KGYKQKVMRM…QQICYQPSAT (61 aa)) are cytoplasmic.

This sequence belongs to the G-protein coupled receptor 1 family.

It is found in the cell membrane. Probable receptor for oxysterols that plays a central role during humoral immunity. Promotes activated B-cell localization in the outer follicle and interfollicular regions. The sequence is that of G-protein coupled receptor 183-B (gpr183b) from Danio rerio (Zebrafish).